The primary structure comprises 1135 residues: Phytochrome C (1135 aa).

The span at 1 to 11 (MSSPLNNRGTC) shows a compositional bias: polar residues. The tract at residues 1-26 (MSSPLNNRGTCSRSSSARSRHSARVV) is disordered. Residues 216–399 (NLSLLCDVLV…VFGIQLNKEV (184 aa)) enclose the GAF domain. Position 321 (Cys-321) interacts with phytochromobilin. 2 PAS domains span residues 618–688 (VTNE…LQGI) and 748–822 (IQGD…TKLS). Residues 902 to 1122 (YIHQELRNPL…IILIEFPVAQ (221 aa)) enclose the Histidine kinase domain.

It belongs to the phytochrome family. As to quaternary structure, homodimer. In terms of processing, contains one covalently linked phytochromobilin chromophore.

Functionally, regulatory photoreceptor which exists in two forms that are reversibly interconvertible by light: the Pr form that absorbs maximally in the red region of the spectrum and the Pfr form that absorbs maximally in the far-red region. Photoconversion of Pr to Pfr induces an array of morphogenic responses, whereas reconversion of Pfr to Pr cancels the induction of those responses. Pfr controls the expression of a number of nuclear genes including those encoding the small subunit of ribulose-bisphosphate carboxylase, chlorophyll A/B binding protein, protochlorophyllide reductase, rRNA, etc. It also controls the expression of its own gene(s) in a negative feedback fashion. The chain is Phytochrome C (PHYC) from Sorghum bicolor (Sorghum).